A 654-amino-acid polypeptide reads, in one-letter code: Biotin-dependent 3-methylcrotonyl-coenzyme A carboxylase alpha1 subunit (654 aa).

The Biotin carboxylation domain occupies 1-448; it reads MFDTVLVANR…DTAVLDERSA (448 aa). The 200-residue stretch at 120–319 folds into the ATP-grasp domain; sequence KNAVAAFDVP…LVEWQLRVGA (200 aa). 148 to 209 provides a ligand contact to ATP; the sequence is AAEVGYPVLI…ERFVLRPRHI (62 aa). Mg(2+)-binding residues include E275, E290, and N292. Positions 275, 290, and 292 each coordinate Mn(2+). The Biotinyl-binding domain occupies 578–653; that stretch reads HRAVGARPAE…KVEQVLARIK (76 aa). K620 bears the N6-biotinyllysine mark.

In terms of assembly, the biotin-dependent acyl-CoA carboxylase complex is composed of AccA1, which contains the biotin carboxylase (BC) and biotin carboxyl carrier protein (BCCP) domains, and AccD1, which contains the carboxyl transferase (CT) domain. The AccA1/AccD1 complex forms a dodecamer. Requires Mg(2+) as cofactor. The cofactor is Mn(2+). It depends on biotin as a cofactor.

It carries out the reaction N(6)-biotinyl-L-lysyl-[protein] + hydrogencarbonate + ATP = N(6)-carboxybiotinyl-L-lysyl-[protein] + ADP + phosphate + H(+). It functions in the pathway amino-acid degradation; L-leucine degradation. Its function is as follows. Component of a biotin-dependent acyl-CoA carboxylase complex. This subunit catalyzes the ATP-dependent carboxylation of the biotin carried by the biotin carboxyl carrier (BCC) domain, resulting in the formation of carboxyl biotin. When associated with the beta1 subunit AccD1, is involved in branched amino-acid catabolism with methylcrotonyl coenzyme A as the substrate. The chain is Biotin-dependent 3-methylcrotonyl-coenzyme A carboxylase alpha1 subunit (accA1) from Mycobacterium bovis (strain ATCC BAA-935 / AF2122/97).